The chain runs to 297 residues: Palmitoyl-protein thioesterase ABHD10, mitochondrial (297 aa).

The N-terminal 43 residues, 1–43 (MAAWVPCRKWGWAAVSFGRHRGLIASLARKPPWAWWLSACRQK), are a transit peptide targeting the mitochondrion. The AB hydrolase-1 domain occupies 69 to 181 (IIFIPGYLSN…GVVTQFHSLP (113 aa)). Residues S143, D240, and H270 each act as charge relay system in the active site.

It belongs to the AB hydrolase superfamily. Expressed in epididymal sperm but not in testicular sperm (at protein level).

It is found in the mitochondrion. The catalysed reaction is S-hexadecanoyl-L-cysteinyl-[protein] + H2O = L-cysteinyl-[protein] + hexadecanoate + H(+). It carries out the reaction mycophenolic acid O-acyl-beta-D-glucuronide + H2O = mycophenolate + D-glucuronate + H(+). Its activity is regulated as follows. Inhibited by palmostatin-B. Acts as an acyl-protein thioesterase that hydrolyzes fatty acids from acylated residues in proteins. Regulates the mitochondrial S-depalmitoylation of the nucleophilic active site residue of peroxiredoxin-5/PRDX5, a key antioxidant protein, therefore modulating mitochondrial antioxidant ability. Also catalyzes the deglucuronidation of mycophenolic acid acyl-glucuronide, an active metabolite of the immunosuppressant drug mycophenolate. This chain is Palmitoyl-protein thioesterase ABHD10, mitochondrial, found in Rattus norvegicus (Rat).